Here is a 374-residue protein sequence, read N- to C-terminus: Cytochrome b (374 aa).

4 helical membrane-spanning segments follow: residues 25–45 (FGSM…FLAI), 69–90 (WIIQ…YMHI), 105–125 (WLSG…GYVL), and 170–190 (FFAL…IHII). Residues histidine 75 and histidine 89 each coordinate heme b. Heme b contacts are provided by histidine 174 and histidine 188. Histidine 193 serves as a coordination point for a ubiquinone. The next 4 membrane-spanning stretches (helical) occupy residues 218-238 (YKDM…LSFT), 280-300 (LGGA…PFTH), 312-332 (LAQI…WTAT), and 339-358 (FITI…MINP).

This sequence belongs to the cytochrome b family. As to quaternary structure, the cytochrome bc1 complex contains 3 respiratory subunits (MT-CYB, CYC1 and UQCRFS1), 2 core proteins (UQCRC1 and UQCRC2) and probably 6 low-molecular weight proteins. The cofactor is heme b.

The protein resides in the mitochondrion inner membrane. In terms of biological role, component of the ubiquinol-cytochrome c reductase complex (complex III or cytochrome b-c1 complex) that is part of the mitochondrial respiratory chain. The b-c1 complex mediates electron transfer from ubiquinol to cytochrome c. Contributes to the generation of a proton gradient across the mitochondrial membrane that is then used for ATP synthesis. This chain is Cytochrome b (MT-CYB), found in Calliophis bivirgatus (Blue Malaysian coral snake).